The following is a 288-amino-acid chain: Release factor glutamine methyltransferase (288 aa).

2 residues coordinate S-adenosyl-L-methionine: D142 and N186. 186–189 (NPPY) is a substrate binding site.

The protein belongs to the protein N5-glutamine methyltransferase family. PrmC subfamily.

The catalysed reaction is L-glutaminyl-[peptide chain release factor] + S-adenosyl-L-methionine = N(5)-methyl-L-glutaminyl-[peptide chain release factor] + S-adenosyl-L-homocysteine + H(+). In terms of biological role, methylates the class 1 translation termination release factors RF1/PrfA and RF2/PrfB on the glutamine residue of the universally conserved GGQ motif. In Mycobacterium leprae (strain TN), this protein is Release factor glutamine methyltransferase.